The chain runs to 212 residues: Adenylate kinase (212 aa).

An ATP-binding site is contributed by 10–15 (GAGKGT). The interval 30–59 (STGDMFRAAMANQTEMGRLAKSYIDKGELV) is NMP. AMP contacts are provided by residues T31, R36, 57-59 (ELV), 86-89 (GYPR), and Q93. Positions 127–159 (GRIINRKTGETFHKVFNPPVDYKEEDYYQREDD) are LID. Residues R128 and 137 to 138 (TF) each bind ATP. The AMP site is built by R156 and R167. Q195 provides a ligand contact to ATP.

Belongs to the adenylate kinase family. In terms of assembly, monomer.

It localises to the cytoplasm. It catalyses the reaction AMP + ATP = 2 ADP. It functions in the pathway purine metabolism; AMP biosynthesis via salvage pathway; AMP from ADP: step 1/1. Functionally, catalyzes the reversible transfer of the terminal phosphate group between ATP and AMP. Plays an important role in cellular energy homeostasis and in adenine nucleotide metabolism. In Streptococcus pyogenes serotype M12 (strain MGAS2096), this protein is Adenylate kinase.